The sequence spans 138 residues: Translation initiation factor 5A (138 aa).

Lys42 bears the Hypusine mark.

Belongs to the eIF-5A family.

The protein localises to the cytoplasm. Functions by promoting the formation of the first peptide bond. The polypeptide is Translation initiation factor 5A (eif5a) (Pyrobaculum aerophilum (strain ATCC 51768 / DSM 7523 / JCM 9630 / CIP 104966 / NBRC 100827 / IM2)).